The chain runs to 338 residues: tRNA (cytosine(34)-C(5))-methyltransferase, mitochondrial (338 aa).

S-adenosyl-L-methionine contacts are provided by residues 140–146, E163, D194, and D212; that span reads CAAPGGK. The active-site Nucleophile is the C266.

Belongs to the class I-like SAM-binding methyltransferase superfamily. RsmB/NOP family.

It is found in the mitochondrion matrix. It carries out the reaction cytidine(34) in mitochondrial tRNA + S-adenosyl-L-methionine = 5-methylcytidine(34) in mitochondrial tRNA + S-adenosyl-L-homocysteine + H(+). Its function is as follows. Mitochondrial tRNA methyltransferase that mediates methylation of cytosine to 5-methylcytosine (m5C) at position 34 of mt-tRNA(Met). mt-tRNA(Met) methylation at cytosine(34) takes place at the wobble position of the anticodon and initiates the formation of 5-formylcytosine (f(5)c) at this position. mt-tRNA(Met) containing the f(5)c modification at the wobble position enables recognition of the AUA codon in addition to the AUG codon, expanding codon recognition in mitochondrial translation. The polypeptide is tRNA (cytosine(34)-C(5))-methyltransferase, mitochondrial (Bos taurus (Bovine)).